Here is a 357-residue protein sequence, read N- to C-terminus: NADH-quinone oxidoreductase subunit H (357 aa).

8 helical membrane-spanning segments follow: residues 20-40 (WLVL…ILCV), 92-112 (ILFV…WAVV), 127-147 (LLYV…AGWA), 165-185 (VSYE…SGSL), 206-226 (FLSW…ISAV), 254-274 (MAFA…SCMA), 294-314 (IPGW…FVWF), and 329-349 (LGWK…AIWM).

It belongs to the complex I subunit 1 family. As to quaternary structure, NDH-1 is composed of 14 different subunits. Subunits NuoA, H, J, K, L, M, N constitute the membrane sector of the complex.

The protein localises to the cell inner membrane. It catalyses the reaction a quinone + NADH + 5 H(+)(in) = a quinol + NAD(+) + 4 H(+)(out). Its function is as follows. NDH-1 shuttles electrons from NADH, via FMN and iron-sulfur (Fe-S) centers, to quinones in the respiratory chain. The immediate electron acceptor for the enzyme in this species is believed to be ubiquinone. Couples the redox reaction to proton translocation (for every two electrons transferred, four hydrogen ions are translocated across the cytoplasmic membrane), and thus conserves the redox energy in a proton gradient. This subunit may bind ubiquinone. The chain is NADH-quinone oxidoreductase subunit H from Bordetella petrii (strain ATCC BAA-461 / DSM 12804 / CCUG 43448).